The following is a 745-amino-acid chain: MKESFYIEGMTCTACSSGIERSLGRKSFVKKIEVSLLNKSANIEFDENQTNLDEIFKLIEKLGYSPKKALTKEKKEFFSPNVKLALAVIFTLFVVYLSMGAMLSPSLLPESLLAIDNHSNFLNACLQLIGALIVMHLGRDFYIQGFKALWHRQPNMSSLIAIGTSAALISSLWQLYLVYTNHYTDQWSYGHYYFESVCVILMFVMVGKRIENVSKDKALDAMQALMKNAPKTALKMQNNQQIEVLVDSIVVGDILKVLPGSAIAVDGEIIEGEGELDESMLSGEALPVYKKVGDKVFSGTFNSHTSFLMKATQNNKNSTLSQIIEMIYNAQSSKAEISRLADKVSSVFVPSVIAISILAFVVWLIIAPKPDFWWNFGIALEVFVSVLVISCPCALGLATPMSILVANQKASSLGLFFKDAKSLEKARLVNTIVFDKTGTLTNGKPVVKSVHSKIELLELLSLALSIEKSSEHVIAKGIVEYAKEHNAPLKEMSGVKVKTGFGISAKTDYQGTKEIIKVGNSEFFNPINTLEIKENGILVFVGRAISEKEDELLGAFVLEDLPKKGVKEHIAQIKNLGINTFLLSGDNRENVQKCAFELGIDGYISNAKPQDKLNKIKELKEKGQIVMMVGDGLNDAPSLAMSDVAVVMAKGSDVSVQAADIVSFNNDIKSVYSAIKLSQATIKNIKENLFWAFCYNSVFIPLACGVLYKANLMLSPAIAGLAMSLSSVSVVLNSQRLRNFKIKDH.

The region spanning 1–67 (MKESFYIEGM…LIEKLGYSPK (67 aa)) is the HMA domain. The Cytoplasmic portion of the chain corresponds to 1–83 (MKESFYIEGM…KKEFFSPNVK (83 aa)). C12 and C15 together coordinate Cu cation. A helical transmembrane segment spans residues 84–104 (LALAVIFTLFVVYLSMGAMLS). At 105-124 (PSLLPESLLAIDNHSNFLNA) the chain is on the extracellular side. Residues 125 to 144 (CLQLIGALIVMHLGRDFYIQ) form a helical membrane-spanning segment. Residues 145-151 (GFKALWH) lie on the Cytoplasmic side of the membrane. Residues 152–172 (RQPNMSSLIAIGTSAALISSL) traverse the membrane as a helical segment. At 173 to 194 (WQLYLVYTNHYTDQWSYGHYYF) the chain is on the extracellular side. Residues 195-215 (ESVCVILMFVMVGKRIENVSK) form a helical membrane-spanning segment. The Cytoplasmic portion of the chain corresponds to 216–343 (DKALDAMQAL…KAEISRLADK (128 aa)). Residues 344–366 (VSSVFVPSVIAISILAFVVWLII) traverse the membrane as a helical segment. The Extracellular portion of the chain corresponds to 367–379 (APKPDFWWNFGIA). A helical transmembrane segment spans residues 380–397 (LEVFVSVLVISCPCALGL). Topologically, residues 398-685 (ATPMSILVAN…KLSQATIKNI (288 aa)) are cytoplasmic. The 4-aspartylphosphate intermediate role is filled by D435. The Mg(2+) site is built by D631 and D635. A helical membrane pass occupies residues 686 to 705 (KENLFWAFCYNSVFIPLACG). Over 706 to 716 (VLYKANLMLSP) the chain is Extracellular. The helical transmembrane segment at 717 to 735 (AIAGLAMSLSSVSVVLNSQ) threads the bilayer. Over 736-745 (RLRNFKIKDH) the chain is Cytoplasmic.

This sequence belongs to the cation transport ATPase (P-type) (TC 3.A.3) family. Type IB subfamily.

The protein localises to the cell membrane. The catalysed reaction is Cu(2+)(in) + ATP + H2O = Cu(2+)(out) + ADP + phosphate + H(+). Probably involved in copper export. The chain is Copper-transporting ATPase (copA) from Helicobacter pylori (strain ATCC 700392 / 26695) (Campylobacter pylori).